The following is an 876-amino-acid chain: Importin subunit beta-1 (876 aa).

M1 carries the N-acetylmethionine modification. 5 HEAT repeats span residues 3–29 (LITI…ERAA), 32–62 (NLPT…LQIK), 85–120 (ANAR…ACAE), 129–160 (LIPQ…ICQD), and 170–201 (SNEI…LLNS). Residue S12 is modified to Phosphoserine. One can recognise an Importin N-terminal domain in the interval 21 to 101 (AQKFLERAAV…KNYVLQTLGT (81 aa)). K211 is modified (N6-acetyllysine). HEAT repeat units lie at residues 212 to 247 (ESER…IMSL), 260 to 302 (LFAI…EAAE), 314 to 359 (YAKG…STCC), 363 to 392 (IVPH…AFGS), 399 to 438 (PNQL…ICEL), 449 to 485 (LAPL…YEAA), 500 to 537 (SSSF…EIVK), 544 to 592 (YPAV…QNVL), 597 to 639 (HQDA…VEVL), 644 to 680 (LKYM…LCRA), 686 to 724 (LPFC…ALAI), 729 to 777 (KKYL…QGLK), 785 to 828 (PDVM…LCTA), and 834 to 875 (LKLV…LKNQ). The interval 286–462 (VCDEEMDLAI…LQCLIEGLSA (177 aa)) is essential for high affinity interaction with RPL23A. Residues 329 to 342 (TLTKQDENDDDDDW) form an IAB-binding region. The segment at 334–419 (DENDDDDDWN…MPTLIELMKD (86 aa)) is ran-GTP binding. N6-acetyllysine is present on residues K835 and K867.

This sequence belongs to the importin beta family. Importin beta-1 subfamily. Forms a complex with an importin alpha subunit. Interacts with XPO1. Forms a heterodimer with IPO7. The KPNB1/IPO7 heterodimer interacts with H1 histone. Interacts with SNUPN. Interacts with H2A, H2B, H3 and H4 histones. Component of an import snRNP complex composed of KPNB1, SNUPN, SMN1 and ZNF259. Component of a nuclear export receptor complex composed of KPNB1, Ran, SNUPN and XPO1. Interacts with SRY. Interacts with PRKCI/atypical protein kinase C iota. Interacts with KPNA2. Interacts with KPNA7. Interacts with SNAI1 (via zinc fingers) and SNAI2 (via zinc fingers). Interacts with SLC35G1 and STIM1. Interacts with DCAF8. Interacts with RAN. Interacts with NUMA1 (via C-terminus); this interaction is inhibited by RanGTP. Interacts with ZBED1/hDREF; required for nuclear import of ZBED1/hDREF. Interacts with SRP19. Interacts with RPL23A (via BIB domain), RPS7 and RPL5. In terms of processing, mono-ADP-ribosylated by PARP16.

The protein localises to the cytoplasm. It is found in the nucleus envelope. In terms of biological role, functions in nuclear protein import, either in association with an adapter protein, like an importin-alpha subunit, which binds to nuclear localization signals (NLS) in cargo substrates, or by acting as autonomous nuclear transport receptor. Acting autonomously, serves itself as NLS receptor. Docking of the importin/substrate complex to the nuclear pore complex (NPC) is mediated by KPNB1 through binding to nucleoporin FxFG repeats and the complex is subsequently translocated through the pore by an energy requiring, Ran-dependent mechanism. At the nucleoplasmic side of the NPC, Ran binds to importin-beta and the three components separate and importin-alpha and -beta are re-exported from the nucleus to the cytoplasm where GTP hydrolysis releases Ran from importin. The directionality of nuclear import is thought to be conferred by an asymmetric distribution of the GTP- and GDP-bound forms of Ran between the cytoplasm and nucleus. Mediates autonomously the nuclear import of ribosomal proteins RPL23A, RPS7 and RPL5. In association with IPO7, mediates the nuclear import of H1 histone. In vitro, mediates nuclear import of H2A, H2B, H3 and H4 histones. Imports MRTFA, SNAI1 and PRKCI into the nucleus. This Mus musculus (Mouse) protein is Importin subunit beta-1 (Kpnb1).